An 862-amino-acid chain; its full sequence is Short transient receptor potential channel 7 (862 aa).

A disordered region spans residues 1–21 (MLGSNTFKNMQRRHTTLREKG). The Cytoplasmic portion of the chain corresponds to 1–351 (MLGSNTFKNM…GLRQQSIAVK (351 aa)). The segment covering 10-21 (MQRRHTTLREKG) has biased composition (basic residues). Residue threonine 15 is modified to Phosphothreonine; by PKG/PRKG1. ANK repeat units lie at residues 42–71 (PEEE…TLNF), 77–106 (MGQN…LARV), 108–134 (DALL…FAQG), and 163–192 (HDIT…RIER). A helical transmembrane segment spans residues 352–372 (FLAVFGVSIGLPFLAIAYWIA). At 373–383 (PCSKLGQTLRS) the chain is on the extracellular side. A helical membrane pass occupies residues 384–404 (PFMKFVAHAVSFTIFLGLLVV). At 405–465 (NASDRFEGVK…KEIWEEGPRE (61 aa)) the chain is on the cytoplasmic side. The chain crosses the membrane as a helical span at residues 466–486 (YVLHLWNLLDFGMLSIFVASF). Over 487–537 (TARFMAFLKASEAQLYVDQYVQDVTLHNVSLPPEVAYFTYARDKWWPSDPQ) the chain is Extracellular. Asparagine 514 carries an N-linked (GlcNAc...) asparagine glycan. The chain crosses the membrane as a helical span at residues 538–558 (IISEGLYAIAVVLSFSRIAYI). Residues 559–581 (LPANESFGPLQISLGRTVKDIFK) lie on the Cytoplasmic side of the membrane. The helical transmembrane segment at 582–602 (FMVIFIMVFVAFMIGMFNLYS) threads the bilayer. Over 603–651 (YYRGAKYNPAFTTVEESFKTLFWSIFGLSEVISVVLKYDHKFIENIGYV) the chain is Extracellular. A helical transmembrane segment spans residues 652–672 (LYGVYNVTMVVVLLNMLIAMI). The Cytoplasmic segment spans residues 673-862 (NNSYQEIEED…HLRVNQGKDI (190 aa)).

It belongs to the transient receptor (TC 1.A.4) family. STrpC subfamily. TRPC7 sub-subfamily. Interacts with MX1 and RNF24. Interacts (via ANK-repeat domains) with PRKG1. In terms of processing, phosphorylation by PRKG1 at Thr-15 negatively regulates TRPC7 activity.

The protein resides in the cell membrane. Its subcellular location is the nucleus envelope. It catalyses the reaction Ca(2+)(in) = Ca(2+)(out). Its function is as follows. Forms a receptor-activated non-selective calcium permeant cation channel. Probably is operated by a phosphatidylinositol second messenger system activated by receptor tyrosine kinases or G-protein coupled receptors. Activated by diacylglycerol (DAG). May also be activated by intracellular calcium store depletion. This Mus musculus (Mouse) protein is Short transient receptor potential channel 7 (Trpc7).